Here is a 251-residue protein sequence, read N- to C-terminus: Cytochrome P450 monooxygenase ppzG (251 aa).

C250 is a heme binding site.

The protein belongs to the cytochrome P450 family. Heme serves as cofactor.

The protein operates within secondary metabolite biosynthesis. Its function is as follows. Cytochrome P450 monooxygenase; part of the gene cluster that mediates the biosynthesis of pyrrolopyrazines, secondary metabolites showing insecticidal activity. The role of ppzG within the pathway has still to be determined. The single multifunctional NRPS ppzA is sufficient to produce peramine via condensation of 1-pyrroline-5-carboxylate and arginine, N-methylation of the alpha-amino group of arginine and reduction of the thioester and the cyclization to form an iminium ion resulting in release from the peptide synthetase. Deprotonation of this intermediate and oxidation of the pyrroline ring would give rise to peramine. In Epichloe species that produce only peramine, the peramine synthetase gene is not localized in a gene cluster, in contrast to Metarhizium species that contain additional pyrrolopyrazine biosynthesis genes. The 2-oxoglutarate-Fe(II) type oxidoreductase ppzC hydroxylates peramine to yield the newly identified compound 8-hydroxyperamine whereas ppzD converts L-proline into trans-4-hydroxy-L-proline, a precursor of peramine biosynthesis. The sequence is that of Cytochrome P450 monooxygenase ppzG from Metarhizium rileyi (strain RCEF 4871) (Nomuraea rileyi).